The primary structure comprises 327 residues: E3 ubiquitin ligase Rnf121 (327 aa).

Helical transmembrane passes span 50–70 (MHAE…LLLV), 79–96 (SYNM…VYFT), 99–119 (LHWW…AYIT), 148–168 (ATGI…NLLF), and 173–193 (EDAM…GVLG). Residues 226–276 (CAVCGQQIFVDVNEEGIIENTYRLSCNHVFHEFCIRGWCIVGKKQTCPYCK) form an RING-type; atypical zinc finger.

It belongs to the RNF121 family.

Its subcellular location is the endoplasmic reticulum membrane. The catalysed reaction is S-ubiquitinyl-[E2 ubiquitin-conjugating enzyme]-L-cysteine + [acceptor protein]-L-lysine = [E2 ubiquitin-conjugating enzyme]-L-cysteine + N(6)-ubiquitinyl-[acceptor protein]-L-lysine.. The protein operates within protein modification; protein ubiquitination. Its function is as follows. E3 ubiquitin ligase which accepts ubiquitin and transfers it to substrates thereby promoting their degradation by the endoplasmic reticulum-associated degradation (ERAD) pathway which is a pathway involved in ubiquitin-dependent degradation of misfolded endoplasmic reticulum proteins. May regulate the unfolded protein response to reduce endoplasmic reticulum stress. The chain is E3 ubiquitin ligase Rnf121 (rnf121) from Xenopus laevis (African clawed frog).